The sequence spans 489 residues: Putative general negative regulator of transcription C16C9.04c (489 aa).

The segment at 18–61 (CPLCMEEIDISDKNFKPCQCGYRVCRFCWHHIKEDLNGRCPACR) adopts an RING-type zinc-finger fold. Residues 76–109 (AEEWKMDLHRKNERKKREKERKEVELSNRKHLAN) adopt a coiled-coil conformation. An RRM domain is found at 116 to 198 (NLAYVNGLSP…VSDGRHLRAS (83 aa)). Residues 199–226 (YGTTKYCTSYLRNQQCPNPSCMYLHEPG) form a C3H1-type zinc finger. 2 stretches are compositionally biased toward polar residues: residues 246–261 (LSTK…HSPS) and 466–479 (ENQP…NNGN). Disordered regions lie at residues 246-268 (LSTK…PFKT) and 458-489 (VPEQ…GFQS).

The protein localises to the nucleus. In terms of biological role, may negatively regulate the basal and activated transcription of many genes. This is Putative general negative regulator of transcription C16C9.04c from Schizosaccharomyces pombe (strain 972 / ATCC 24843) (Fission yeast).